A 131-amino-acid polypeptide reads, in one-letter code: Small ribosomal subunit protein uS8 (131 aa).

The segment at 1-27 (MSMTDPVADMLTRIRNGQRASKNEVSM) is disordered.

This sequence belongs to the universal ribosomal protein uS8 family. Part of the 30S ribosomal subunit. Contacts proteins S5 and S12.

One of the primary rRNA binding proteins, it binds directly to 16S rRNA central domain where it helps coordinate assembly of the platform of the 30S subunit. The sequence is that of Small ribosomal subunit protein uS8 from Thioalkalivibrio sulfidiphilus (strain HL-EbGR7).